Consider the following 94-residue polypeptide: Large ribosomal subunit protein bL25 (94 aa).

It belongs to the bacterial ribosomal protein bL25 family. Part of the 50S ribosomal subunit; part of the 5S rRNA/L5/L18/L25 subcomplex. Contacts the 5S rRNA. Binds to the 5S rRNA independently of L5 and L18.

Functionally, this is one of the proteins that binds to the 5S RNA in the ribosome where it forms part of the central protuberance. The protein is Large ribosomal subunit protein bL25 of Sodalis glossinidius (strain morsitans).